Consider the following 98-residue polypeptide: Defensin-like protein 192 (98 aa).

A signal peptide spans Met-1–Ala-27. 4 disulfide bridges follow: Cys-32–Cys-86, Cys-45–Cys-69, Cys-54–Cys-81, and Cys-58–Cys-83.

The protein belongs to the DEFL family. Protease inhibitor I18 (RTI/MTI-2) subfamily.

Its subcellular location is the secreted. The chain is Defensin-like protein 192 (ATTI7) from Arabidopsis thaliana (Mouse-ear cress).